Consider the following 130-residue polypeptide: Small ribosomal subunit protein uS9 (130 aa).

The protein belongs to the universal ribosomal protein uS9 family.

This Pseudomonas putida (strain W619) protein is Small ribosomal subunit protein uS9.